Reading from the N-terminus, the 501-residue chain is Cytochrome P450 monooxygeanse terP (501 aa).

The helical transmembrane segment at 2 to 22 threads the bilayer; the sequence is PSLLLSLLLLQVPIICAWLLV. Cys-441 contacts heme.

Belongs to the cytochrome P450 family. The cofactor is heme.

It localises to the membrane. Its pathway is secondary metabolite biosynthesis. Cytochrome P450 monooxygeanse; part of the gene cluster that mediates the biosynthesis of terpendoles, indole-diterpene (IDT) mycotoxins including terpendole I, terpendole K, terpendole C, as well as the kinesin Eg5 inhibitor terpendole E. TerP has dual activity and is able to convert terpendole E to 13-desoxyterpendole I and paspaline to 13-desoxypaxilline. Terpendoles biosynthesis begins with the synthesis of geranylgeranyl diphosphate (GGPP) by a yet unidentified GGPP synthase. Condensation of indole-3-glycerol phosphate with GGPP by the prenyltransferase terC then forms 3-geranylgeranylindole (3-GGI), followed by epoxidation and cyclization of this intermediate (by the FAD-dependent monooxygeanse terM and the terpene cyclase terB) to form paspaline. The cytochrome monooxygenase terQ then hydroxylates paspalline at C-11 to yield terpendole E. The cytochrome monooxygenase terP converts terpendole E to 13-desoxyterpendole I, and terQ converts 13-desoxyterpendole I into terpendole I. TerF and terK are required for conversion of terpendole I to terpendole C which is further converted to terpendole K. In Tolypocladium album (Soil fungus), this protein is Cytochrome P450 monooxygeanse terP.